Consider the following 511-residue polypeptide: T-complex protein 1 subunit eta (511 aa).

It belongs to the TCP-1 chaperonin family. Component of the T-complex protein 1 (TCP1) complex.

The protein localises to the cytoplasm. In terms of biological role, molecular chaperone; assists the folding of proteins upon ATP hydrolysis. The polypeptide is T-complex protein 1 subunit eta (CCT7) (Encephalitozoon cuniculi (strain GB-M1) (Microsporidian parasite)).